Reading from the N-terminus, the 193-residue chain is Molybdenum cofactor guanylyltransferase (193 aa).

GTP-binding positions include 8–10 (LAG), Lys-21, Asp-67, and Asp-98. Mg(2+) is bound at residue Asp-98.

The protein belongs to the MobA family. Monomer. Mg(2+) is required as a cofactor.

It is found in the cytoplasm. The catalysed reaction is Mo-molybdopterin + GTP + H(+) = Mo-molybdopterin guanine dinucleotide + diphosphate. Its function is as follows. Transfers a GMP moiety from GTP to Mo-molybdopterin (Mo-MPT) cofactor (Moco or molybdenum cofactor) to form Mo-molybdopterin guanine dinucleotide (Mo-MGD) cofactor. The protein is Molybdenum cofactor guanylyltransferase of Cereibacter sphaeroides (Rhodobacter sphaeroides).